Here is a 641-residue protein sequence, read N- to C-terminus: Isomalto-dextranase (641 aa).

Positions 1–39 (MMNLSRRTLLTTGSAATLAYALGMAGSAQAATAVTARPG) form a signal peptide, tat-type signal. Asp227 acts as the Nucleophile in catalysis. Asp288 (proton donor) is an active-site residue. The 141-residue stretch at 500 to 640 (TRYPAAFAAW…AINLNWIELD (141 aa)) folds into the CBM6 domain. The disordered stretch occupies residues 556–588 (SGYRYANATDDNTTSKTTTKKANPEKADRSTVD). Over residues 561–576 (ANATDDNTTSKTTTKK) the composition is skewed to low complexity. Residues 577–586 (ANPEKADRST) are compositionally biased toward basic and acidic residues.

This sequence belongs to the glycosyl hydrolase 27 family. Predicted to be exported by the Tat system. The position of the signal peptide cleavage has been experimentally proven.

Its subcellular location is the secreted. It catalyses the reaction Hydrolysis of (1-&gt;6)-alpha-D-glucosidic linkages in polysaccharides, to remove successive isomaltose units from the non-reducing ends of the chains.. The sequence is that of Isomalto-dextranase (imd) from Arthrobacter globiformis.